The chain runs to 332 residues: tRNA-dihydrouridine(20/20a) synthase (332 aa).

FMN-binding positions include 19-21 (PML) and Gln-71. Cys-101 (proton donor) is an active-site residue. FMN contacts are provided by residues Lys-140, His-173, 213–215 (NGG), and 235–236 (GR).

The protein belongs to the Dus family. DusA subfamily. Requires FMN as cofactor.

It catalyses the reaction 5,6-dihydrouridine(20) in tRNA + NADP(+) = uridine(20) in tRNA + NADPH + H(+). It carries out the reaction 5,6-dihydrouridine(20) in tRNA + NAD(+) = uridine(20) in tRNA + NADH + H(+). The enzyme catalyses 5,6-dihydrouridine(20a) in tRNA + NADP(+) = uridine(20a) in tRNA + NADPH + H(+). The catalysed reaction is 5,6-dihydrouridine(20a) in tRNA + NAD(+) = uridine(20a) in tRNA + NADH + H(+). In terms of biological role, catalyzes the synthesis of 5,6-dihydrouridine (D), a modified base found in the D-loop of most tRNAs, via the reduction of the C5-C6 double bond in target uridines. Specifically modifies U20 and U20a in tRNAs. The sequence is that of tRNA-dihydrouridine(20/20a) synthase from Salmonella typhi.